Consider the following 378-residue polypeptide: ATQGQVITCKAAVAWEPNKPLTIEDVEVAPPQANEVRIQILFTALCHTDAYTLGGKDPEGLFPCILGHEAAGIVESVGEGVTDVKPGDHVIPSYQAECGECKFCKSPKTNLCGKVRAATGVGVMMADRKSRFSVKGKPIYHFMGTSTFSQYTVVHDVSVAKIHPDAPLDKVCLLGCGVPTGLGAVWNTAKVEPGSIVAIFGLGTVGLAVAEGAKSAGASRIIGIDIDSNKYDTAKNFGVTEFINPKDHEKPIQQVIIDLTDGGVDYSFECLGNVSVMRSALECCHKGWGTSVIVGVAASGQEISTRPFQLVTGRVWKGTAFGGFKSRSQVPWLVEKYLKKEIKVDEYITHNLTLLEINKAFDLLHEGQCLRCVLAVHD.

Residue Ala-1 is modified to N-acetylalanine. A Zn(2+)-binding site is contributed by Cys-46. Residue His-47 coordinates NAD(+). An alcohol contacts are provided by Thr-48 and His-68. Zn(2+) is bound by residues His-68, Glu-69, Cys-98, Cys-101, Cys-104, Cys-112, and Cys-176. NAD(+) contacts are provided by residues 201 to 206 (GLGTVG), Asp-225, Lys-230, 294 to 296 (VGV), 319 to 321 (TAF), and Arg-371.

The protein belongs to the zinc-containing alcohol dehydrogenase family. Class-III subfamily. In terms of assembly, homodimer. Zn(2+) serves as cofactor.

It localises to the cytoplasm. It carries out the reaction a primary alcohol + NAD(+) = an aldehyde + NADH + H(+). The enzyme catalyses a secondary alcohol + NAD(+) = a ketone + NADH + H(+). It catalyses the reaction S-(hydroxymethyl)glutathione + NADP(+) = S-formylglutathione + NADPH + H(+). The catalysed reaction is S-(hydroxymethyl)glutathione + NAD(+) = S-formylglutathione + NADH + H(+). Its function is as follows. Class-III ADH is remarkably ineffective in oxidizing ethanol, but it readily catalyzes the oxidation of long-chain primary alcohols and the oxidation of S-(hydroxymethyl) glutathione. The polypeptide is Alcohol dehydrogenase class-3 (Pisum sativum (Garden pea)).